An 88-amino-acid chain; its full sequence is UPF0250 protein Swoo_3713 (88 aa).

The protein belongs to the UPF0250 family.

The polypeptide is UPF0250 protein Swoo_3713 (Shewanella woodyi (strain ATCC 51908 / MS32)).